A 255-amino-acid polypeptide reads, in one-letter code: MPADIRIVPCLTDNFGYLVHDPATGATASIDAPEAAPLIAALDKEGWKLTDILVTHHHGDHVGGIAELKKKYQCRVHAPHDANAKIADADVRLQEGDVVRVGDLTARVLETPGHTLDHLSYVFDDDRALFAADTLFSIGCGRVFEGTYPMMWESLLKLRALPDDFKLYCGHEYTASNVKFALGIEPDNAALQARAKQVESLRAEGKPTIPVTLGEEKQANVFLRADVPSVAAAVGMPGAPAAEVFGEIRERKNNG.

The Zn(2+) site is built by histidine 56, histidine 58, aspartate 60, histidine 61, histidine 114, aspartate 133, and histidine 171.

The protein belongs to the metallo-beta-lactamase superfamily. Glyoxalase II family. In terms of assembly, monomer. Requires Zn(2+) as cofactor.

The enzyme catalyses an S-(2-hydroxyacyl)glutathione + H2O = a 2-hydroxy carboxylate + glutathione + H(+). It functions in the pathway secondary metabolite metabolism; methylglyoxal degradation; (R)-lactate from methylglyoxal: step 2/2. Its function is as follows. Thiolesterase that catalyzes the hydrolysis of S-D-lactoyl-glutathione to form glutathione and D-lactic acid. In Rhodopseudomonas palustris (strain ATCC BAA-98 / CGA009), this protein is Hydroxyacylglutathione hydrolase.